A 689-amino-acid polypeptide reads, in one-letter code: DNA ligase (689 aa).

NAD(+)-binding positions include 40–44, 89–90, and Glu121; these read DSEYD and SL. Residue Lys123 is the N6-AMP-lysine intermediate of the active site. Residues Arg144, Glu179, Lys295, and Lys319 each coordinate NAD(+). Residues Cys413, Cys416, Cys431, and Cys437 each coordinate Zn(2+). Positions 610 to 689 constitute a BRCT domain; it reads REQSGLTDKI…EEWLTLIKNV (80 aa).

This sequence belongs to the NAD-dependent DNA ligase family. LigA subfamily. Requires Mg(2+) as cofactor. Mn(2+) is required as a cofactor.

The catalysed reaction is NAD(+) + (deoxyribonucleotide)n-3'-hydroxyl + 5'-phospho-(deoxyribonucleotide)m = (deoxyribonucleotide)n+m + AMP + beta-nicotinamide D-nucleotide.. In terms of biological role, DNA ligase that catalyzes the formation of phosphodiester linkages between 5'-phosphoryl and 3'-hydroxyl groups in double-stranded DNA using NAD as a coenzyme and as the energy source for the reaction. It is essential for DNA replication and repair of damaged DNA. The protein is DNA ligase of Rickettsia conorii (strain ATCC VR-613 / Malish 7).